Here is a 131-residue protein sequence, read N- to C-terminus: C-type natriuretic peptide 2 (131 aa).

The signal sequence occupies residues 1-22 (MLYPALLCAALLLIAPLGHTEG). A propeptide spanning residues 23–109 (RTLYPSPDAI…KRAVTDRSRR (87 aa)) is cleaved from the precursor. Cysteines 115 and 131 form a disulfide.

Belongs to the natriuretic peptide family. Expressed in brain and to a low extent in atrium.

Its subcellular location is the secreted. Functionally, exhibits natriuretic and vasodepressor activity. Has a cGMP-stimulating activity. In Oncorhynchus mykiss (Rainbow trout), this protein is C-type natriuretic peptide 2.